A 57-amino-acid chain; its full sequence is UPF0391 membrane protein Atu4467 (57 aa).

The next 2 helical transmembrane spans lie at tryptophan 4 to serine 24 and isoleucine 33 to glycine 53.

It belongs to the UPF0391 family.

It localises to the cell membrane. In Agrobacterium fabrum (strain C58 / ATCC 33970) (Agrobacterium tumefaciens (strain C58)), this protein is UPF0391 membrane protein Atu4467.